The sequence spans 97 residues: Translation initiation factor 1A (97 aa).

Residues 8-82 (IRVRLPDRKK…DRADIVWRYT (75 aa)) enclose the S1-like domain.

The protein belongs to the eIF-1A family.

Seems to be required for maximal rate of protein biosynthesis. Enhances ribosome dissociation into subunits and stabilizes the binding of the initiator Met-tRNA(I) to 40 S ribosomal subunits. In Archaeoglobus fulgidus (strain ATCC 49558 / DSM 4304 / JCM 9628 / NBRC 100126 / VC-16), this protein is Translation initiation factor 1A (eIF1A).